A 2656-amino-acid chain; its full sequence is 1-phosphatidylinositol 3-phosphate 5-kinase (2656 aa).

Positions 24–159 are disordered; sequence FGTDDSQKDF…NSTNNDTSSN (136 aa). Composition is skewed to low complexity over residues 59–107 and 124–159; these read NNNN…NNNN and SNTT…TSSN. The FYVE-type zinc-finger motif lies at 198-255; the sequence is DHSSAVCYECSEEFTTFKRRHHCRLCGQIFCWKCSQKTLTDGKGERVRVCNFCYRRYM. Zn(2+) contacts are provided by Cys204, Cys207, Cys220, Cys223, Cys228, Cys231, Cys247, and Cys250. Residues 304–331 are compositionally biased toward polar residues; it reads NVSLGNSGDNSSFVQSPNNNFSQSPTFS. Disordered regions lie at residues 304 to 383, 465 to 495, 517 to 570, 618 to 657, 670 to 823, 1115 to 1150, 1633 to 1659, 1710 to 1844, 2031 to 2127, 2179 to 2208, 2246 to 2304, and 2617 to 2656; these read NVSL…NNQQ, DHHQ…SPIV, DNLD…SSSS, NNND…NTSF, TIGR…QQQP, SNSI…NNST, RSKR…QILI, VNNN…SSTP, QQQQ…SISP, NQQQ…SIIE, QQGD…SSNS, and NNNN…QINK. A compositionally biased stretch (low complexity) spans 332-355; that stretch reads QQQQQQQQQQQQQQQQQQQQQQQQ. Composition is skewed to polar residues over residues 356–371, 473–489, and 542–557; these read TTGV…NSTL, SNSH…TPSG, and SHSS…TVST. 5 stretches are compositionally biased toward low complexity: residues 558 to 570, 618 to 637, 674 to 730, 743 to 757, and 811 to 823; these read GESN…SSSS, NNND…NNNN, NNNN…NLPN, QQQQ…QPQP, and PSSS…QQQP. Low complexity-rich tracts occupy residues 1639–1656 and 1710–1746; these read QQQQ…PQPQ and VNNN…NNNN. 2 coiled-coil regions span residues 1741 to 1823 and 2019 to 2061; these read NNNN…NNNN and KRIS…QQEQ. Positions 1750-1798 are enriched in basic and acidic residues; sequence NKSENENENKNENKNENENENENKNENKNENENENKKENENQLEIKNEN. Composition is skewed to low complexity over residues 1807 to 1833, 2031 to 2061, 2078 to 2107, and 2118 to 2127; these read NNNN…IDNN, QQQQ…QQEQ, SPSS…SETN, and LSGSPISISP. The span at 2193-2202 shows a compositional bias: basic and acidic residues; that stretch reads IDEKDDRNTE. Low complexity-rich tracts occupy residues 2252 to 2283 and 2618 to 2647; these read NNNN…NNNN and NNNN…GNIN. Positions 2275-2596 constitute a PIPK domain; that stretch reads NNNNTNNNNE…RFRDAMWLYF (322 aa).

Its subcellular location is the endosome membrane. It is found in the early endosome membrane. It localises to the cytoplasmic vesicle. The protein resides in the phagosome membrane. The protein localises to the late endosome membrane. It catalyses the reaction a 1,2-diacyl-sn-glycero-3-phospho-(1D-myo-inositol-3-phosphate) + ATP = a 1,2-diacyl-sn-glycero-3-phospho-(1D-myo-inositol-3,5-bisphosphate) + ADP + H(+). The catalysed reaction is a 1,2-diacyl-sn-glycero-3-phospho-(1D-myo-inositol) + ATP = a 1,2-diacyl-sn-glycero-3-phospho-(1D-myo-inositol-5-phosphate) + ADP + H(+). The enzyme catalyses L-seryl-[protein] + ATP = O-phospho-L-seryl-[protein] + ADP + H(+). Its function is as follows. Dual specificity kinase part of the PI(3,5)P2 regulatory complex which regulates both the synthesis and turnover of phosphatidylinositol 3,5-bisphosphate (PtdIns(3,5)P2). Catalyzes the phosphorylation of phosphatidylinositol 3-phosphate on the fifth hydroxyl of the myo-inositol ring, to form phosphatidylinositol 3,5-bisphosphate. In Dictyostelium discoideum (Social amoeba), this protein is 1-phosphatidylinositol 3-phosphate 5-kinase (pip5k3).